Here is a 194-residue protein sequence, read N- to C-terminus: NADH-quinone oxidoreductase subunit B (194 aa).

4 residues coordinate [4Fe-4S] cluster: C73, C74, C138, and C168.

It belongs to the complex I 20 kDa subunit family. In terms of assembly, NDH-1 is composed of 14 different subunits. Subunits NuoB, C, D, E, F, and G constitute the peripheral sector of the complex. It depends on [4Fe-4S] cluster as a cofactor.

The protein resides in the cell inner membrane. It catalyses the reaction a quinone + NADH + 5 H(+)(in) = a quinol + NAD(+) + 4 H(+)(out). In terms of biological role, NDH-1 shuttles electrons from NADH, via FMN and iron-sulfur (Fe-S) centers, to quinones in the respiratory chain. The immediate electron acceptor for the enzyme in this species is believed to be ubiquinone. Couples the redox reaction to proton translocation (for every two electrons transferred, four hydrogen ions are translocated across the cytoplasmic membrane), and thus conserves the redox energy in a proton gradient. The chain is NADH-quinone oxidoreductase subunit B from Bradyrhizobium sp. (strain BTAi1 / ATCC BAA-1182).